The sequence spans 324 residues: NADH-quinone oxidoreductase subunit H (324 aa).

The next 8 membrane-spanning stretches (helical) occupy residues 11–31 (ILIT…CGAF), 81–101 (VIFT…FAIV), 114–134 (IGIL…LFAG), 154–174 (VSYE…AGSF), 186–206 (LWNV…GVAV), 237–257 (FFVG…TLFF), 264–284 (ILPP…MFIL), and 304–324 (VCLP…LYNA).

This sequence belongs to the complex I subunit 1 family. As to quaternary structure, NDH-1 is composed of 13 different subunits. Subunits NuoA, H, J, K, L, M, N constitute the membrane sector of the complex.

The protein localises to the cell inner membrane. The catalysed reaction is a quinone + NADH + 5 H(+)(in) = a quinol + NAD(+) + 4 H(+)(out). Its function is as follows. NDH-1 shuttles electrons from NADH, via FMN and iron-sulfur (Fe-S) centers, to quinones in the respiratory chain. The immediate electron acceptor for the enzyme in this species is believed to be ubiquinone. Couples the redox reaction to proton translocation (for every two electrons transferred, four hydrogen ions are translocated across the cytoplasmic membrane), and thus conserves the redox energy in a proton gradient. This subunit may bind ubiquinone. This chain is NADH-quinone oxidoreductase subunit H, found in Pectobacterium carotovorum subsp. carotovorum (strain PC1).